Here is a 232-residue protein sequence, read N- to C-terminus: YlmG homolog protein 1-1, chloroplastic (232 aa).

The N-terminal 16 residues, 1 to 16 (MAAITALTLRSPVYLP), are a transit peptide targeting the chloroplast. Helical transmembrane passes span 147-167 (LTVV…VLMV) and 201-221 (IIPP…AVLG).

This sequence belongs to the YggT family.

The protein localises to the plastid. It localises to the chloroplast thylakoid membrane. In terms of biological role, required for the proper distribution of nucleoids in chloroplasts. The nucleoid partitioning by YLMG1-1 may be related to chloroplast division processes. This Arabidopsis thaliana (Mouse-ear cress) protein is YlmG homolog protein 1-1, chloroplastic.